The primary structure comprises 229 residues: 2-C-methyl-D-erythritol 4-phosphate cytidylyltransferase (229 aa).

Belongs to the IspD/TarI cytidylyltransferase family. IspD subfamily.

It carries out the reaction 2-C-methyl-D-erythritol 4-phosphate + CTP + H(+) = 4-CDP-2-C-methyl-D-erythritol + diphosphate. Its pathway is isoprenoid biosynthesis; isopentenyl diphosphate biosynthesis via DXP pathway; isopentenyl diphosphate from 1-deoxy-D-xylulose 5-phosphate: step 2/6. Catalyzes the formation of 4-diphosphocytidyl-2-C-methyl-D-erythritol from CTP and 2-C-methyl-D-erythritol 4-phosphate (MEP). The sequence is that of 2-C-methyl-D-erythritol 4-phosphate cytidylyltransferase from Shouchella clausii (strain KSM-K16) (Alkalihalobacillus clausii).